The chain runs to 142 residues: Large ribosomal subunit protein uL13 (142 aa).

This sequence belongs to the universal ribosomal protein uL13 family. In terms of assembly, part of the 50S ribosomal subunit.

In terms of biological role, this protein is one of the early assembly proteins of the 50S ribosomal subunit, although it is not seen to bind rRNA by itself. It is important during the early stages of 50S assembly. This Maridesulfovibrio salexigens (strain ATCC 14822 / DSM 2638 / NCIMB 8403 / VKM B-1763) (Desulfovibrio salexigens) protein is Large ribosomal subunit protein uL13.